A 194-amino-acid chain; its full sequence is uncharacterized protein (194 aa).

This is an uncharacterized protein from Acanthamoeba polyphaga (Amoeba).